The following is a 287-amino-acid chain: Orotidine 5'-phosphate decarboxylase (287 aa).

The active-site Proton donor is Lys-97.

It belongs to the OMP decarboxylase family. Type 2 subfamily.

It catalyses the reaction orotidine 5'-phosphate + H(+) = UMP + CO2. The protein operates within pyrimidine metabolism; UMP biosynthesis via de novo pathway; UMP from orotate: step 2/2. The sequence is that of Orotidine 5'-phosphate decarboxylase (pyrF) from Clostridium perfringens (strain 13 / Type A).